A 328-amino-acid chain; its full sequence is Probable tRNA pseudouridine synthase B (328 aa).

Residue aspartate 71 is the Nucleophile of the active site. Positions leucine 238–methionine 313 constitute a PUA domain.

The protein belongs to the pseudouridine synthase TruB family. Type 2 subfamily.

It carries out the reaction uridine(55) in tRNA = pseudouridine(55) in tRNA. Could be responsible for synthesis of pseudouridine from uracil-55 in the psi GC loop of transfer RNAs. This Pyrobaculum islandicum (strain DSM 4184 / JCM 9189 / GEO3) protein is Probable tRNA pseudouridine synthase B.